The following is a 433-amino-acid chain: Serine/threonine-protein phosphatase 2A activator 2 (433 aa).

Over residues 1 to 10 the composition is skewed to pro residues; that stretch reads MTSQAPPQPA. Disordered stretches follow at residues 1–67 and 367–400; these read MTSQ…NWTF and SMSEDTGAGDEADVEDDPHAGHDHTGKAHDGTGW. A compositionally biased stretch (low complexity) spans 11-23; that stretch reads SSPGVAAPAAASS. Residues 45–59 show a composition bias toward pro residues; the sequence is NPTPIPETPALPTPP. Over residues 367–382 the composition is skewed to acidic residues; that stretch reads SMSEDTGAGDEADVED. Residues 383-396 are compositionally biased toward basic and acidic residues; it reads DPHAGHDHTGKAHD.

The protein belongs to the PTPA-type PPIase family.

It is found in the cytoplasm. The catalysed reaction is [protein]-peptidylproline (omega=180) = [protein]-peptidylproline (omega=0). In terms of biological role, PPIases accelerate the folding of proteins. It catalyzes the cis-trans isomerization of proline imidic peptide bonds in oligopeptides. Acts as a regulatory subunit for PP2A-like phosphatases modulating their activity or substrate specificity, probably by inducing a conformational change in the catalytic subunit, a direct target of the PPIase. Can reactivate inactive phosphatase PP2A-phosphatase methylesterase complexes (PP2Ai) in presence of ATP and Mg(2+) by dissociating the inactive form from the complex. This is Serine/threonine-protein phosphatase 2A activator 2 (RRD2) from Gibberella zeae (strain ATCC MYA-4620 / CBS 123657 / FGSC 9075 / NRRL 31084 / PH-1) (Wheat head blight fungus).